We begin with the raw amino-acid sequence, 2617 residues long: DNA-directed RNA polymerase subunit beta'' (2617 aa).

Zn(2+)-binding residues include Cys-263, Cys-334, Cys-341, and Cys-344.

Belongs to the RNA polymerase beta' chain family. RpoC2 subfamily. In plastids the minimal PEP RNA polymerase catalytic core is composed of four subunits: alpha, beta, beta', and beta''. When a (nuclear-encoded) sigma factor is associated with the core the holoenzyme is formed, which can initiate transcription. Zn(2+) is required as a cofactor.

The protein localises to the plastid. It localises to the chloroplast. The enzyme catalyses RNA(n) + a ribonucleoside 5'-triphosphate = RNA(n+1) + diphosphate. DNA-dependent RNA polymerase catalyzes the transcription of DNA into RNA using the four ribonucleoside triphosphates as substrates. The sequence is that of DNA-directed RNA polymerase subunit beta'' from Oedogonium cardiacum (Filamentous green alga).